We begin with the raw amino-acid sequence, 703 residues long: MGFNIERVDKPFVVKSPYQPSGDQPKAIEELATRIENGENDVVLMGATGTGKTATTAWLIERLQRPTLIIEPNKTLAAQLCAEFRELMPDNAVSYFVSYYDYYQPEAYIPQTDTYIEKDSNINDDVERLRHQATANLLTRRDCVVVATVSCIYGLGTPEEYAGRMLFLKEGQQINRDDLLRRFVAMQYKRNDIAFTRGTFRVRGDTVEIIPVYEELAIRIEFFGDEIDRISTLHPLTGDVIAHEPQVHIFPASHYVAGPERMERALKTIREELDGRLSELRKQGKELEAQRLDMRTTYDLEMLTQVGVCSGVENYSRHLDGRAAGTPPHTLLDFFPDDFLLVIDESHVTVPQIGAMYEGDASRKRTLVEHGFRLPSAMDNRPLKWPEFLQRVGQTVYLSATPGDYELGLSDGVVEQIIRPTGLLDPKIDVRPVKGQIDDLLAEIKARVARNERALVTTLTKKMAEDLTDYLLERGIKVEYLHSDVDTLRRVELLRMLREGKIDVIVGINLLREGLDLPEVSLVAILDADKEGFLRSYRSLIQTIGRAARNVSGVVIMYADETTEAMRQAIDETDRRRAKQIAYNQEHGIDPKPLIKKISDVNDMLAKEDVDTQTLLEGGYRNAGKAGNTHLGVPVLDPNEADKRHEEILKAGLPAQDLADLIRQLSEQMHTAAEQLQFELAARLRDEIRDLKKELRQMTEAGQ.

The Helicase ATP-binding domain maps to 33–190 (TRIENGENDV…RRFVAMQYKR (158 aa)). 46–53 (GATGTGKT) is an ATP binding site. The Beta-hairpin signature appears at 99 to 122 (YYDYYQPEAYIPQTDTYIEKDSNI). The region spanning 436 to 589 (QIDDLLAEIK…QIAYNQEHGI (154 aa)) is the Helicase C-terminal domain. The UVR domain maps to 659-694 (ADLIRQLSEQMHTAAEQLQFELAARLRDEIRDLKKE).

Belongs to the UvrB family. As to quaternary structure, forms a heterotetramer with UvrA during the search for lesions. Interacts with UvrC in an incision complex.

It localises to the cytoplasm. In terms of biological role, the UvrABC repair system catalyzes the recognition and processing of DNA lesions. A damage recognition complex composed of 2 UvrA and 2 UvrB subunits scans DNA for abnormalities. Upon binding of the UvrA(2)B(2) complex to a putative damaged site, the DNA wraps around one UvrB monomer. DNA wrap is dependent on ATP binding by UvrB and probably causes local melting of the DNA helix, facilitating insertion of UvrB beta-hairpin between the DNA strands. Then UvrB probes one DNA strand for the presence of a lesion. If a lesion is found the UvrA subunits dissociate and the UvrB-DNA preincision complex is formed. This complex is subsequently bound by UvrC and the second UvrB is released. If no lesion is found, the DNA wraps around the other UvrB subunit that will check the other stand for damage. This chain is UvrABC system protein B, found in Bifidobacterium longum subsp. infantis (strain ATCC 15697 / DSM 20088 / JCM 1222 / NCTC 11817 / S12).